Reading from the N-terminus, the 374-residue chain is Relaxin-3 receptor 2 (374 aa).

Over 1–43 (MPTLNTSASPPTFFWANASGGSVLSADDAPMPVKFLALRLMVA) the chain is Extracellular. Residues Asn-5 and Asn-17 are each glycosylated (N-linked (GlcNAc...) asparagine). The helical transmembrane segment at 44–64 (LAYGLVGAIGLLGNLAVLWVL) threads the bilayer. Over 65–78 (SNCARRAPGPPSDT) the chain is Cytoplasmic. A helical transmembrane segment spans residues 79–99 (FVFNLALADLGLALTLPFWAA). Topologically, residues 100–116 (ESALDFHWPFGGALCKM) are extracellular. A disulfide bridge connects residues Cys-114 and Cys-191. Residues 117-137 (VLTATVLNVYASIFLITALSV) form a helical membrane-spanning segment. At 138-154 (ARYWVVAMAAGPGTHLS) the chain is on the cytoplasmic side. Residues 155–175 (LFWARIATLAVWAAAALVTVP) form a helical membrane-spanning segment. Topologically, residues 176–209 (TAVFGVEGEVCGVRLCLLRFPSRYWLGAYQLQRV) are extracellular. The chain crosses the membrane as a helical span at residues 210–230 (VLAFMVPLGVITTSYLLLLAF). The Cytoplasmic portion of the chain corresponds to 231-249 (LQRRQRRRQDSRVVARSVR). The chain crosses the membrane as a helical span at residues 250–270 (ILVASFFLCWFPNHVVTLWGV). The Extracellular portion of the chain corresponds to 271–281 (LVKFDLVPWNS). A helical membrane pass occupies residues 282–302 (TFYTIQTYVFPVTTCLAHSNS). Residues 303–374 (CLNPVLYCLL…LTNLDRGTPG (72 aa)) are Cytoplasmic-facing.

The protein belongs to the G-protein coupled receptor 1 family. In terms of tissue distribution, expressed in a broader range of tissues including brain, kidney, testis, thymus, placenta, prostate, salivary gland, thyroid and colon.

Its subcellular location is the cell membrane. Its function is as follows. High affinity receptor for INSL5. Also acts as a receptor for RLN3/relaxin-3, as well as bradykinin and kallidin. Binding of the ligand inhibit cAMP accumulation. The protein is Relaxin-3 receptor 2 (RXFP4) of Homo sapiens (Human).